Here is an 839-residue protein sequence, read N- to C-terminus: Oligopeptide transporter phomP2 (839 aa).

Positions Met1–Asp58 are disordered. Residues Ser23–Asn36 show a composition bias toward low complexity. N-linked (GlcNAc...) asparagine glycans are attached at residues Asn33 and Asn36. Residues Ser44 to Asp58 show a composition bias toward basic and acidic residues. 6 helical membrane passes run Val105–Phe125, Ala177–Ser197, Pro210–Tyr230, Val268–Pro288, Gly315–Phe335, and Phe345–Leu365. Residues Asn386 and Asn398 are each glycosylated (N-linked (GlcNAc...) asparagine). 4 consecutive transmembrane segments (helical) span residues Ala415–Phe435, Ala478–Gly498, Trp505–Phe525, and Trp585–Val605. The span at Gln629–Gln646 shows a compositional bias: gly residues. A disordered region spans residues Gln629–His654. Transmembrane regions (helical) follow at residues Asn665–Gly685, Trp697–His717, and Trp728–Thr748. Asn749 is a glycosylation site (N-linked (GlcNAc...) asparagine). Residues Ala781 to Phe801 form a helical membrane-spanning segment.

It belongs to the oligopeptide OPT transporter family.

Its subcellular location is the membrane. Functionally, oligopeptide transporter; part of the gene cluster that mediates the biosynthesis of the phomopsins, a group of hexapeptide mycotoxins which infects lupins and causes lupinosis disease in livestock. In Diaporthe leptostromiformis (Lupinosis disease fungus), this protein is Oligopeptide transporter phomP2.